A 447-amino-acid chain; its full sequence is GTPase Era, mitochondrial (447 aa).

A mitochondrion-targeting transit peptide spans 1-18 (MTLRSCETFLRRSLRFST). An Era-type G domain is found at 109–340 (KSLKVAIVGS…RYLFVAAKPC (232 aa)). The tract at residues 117-124 (GSPNAGKS) is G1. 117-124 (GSPNAGKS) provides a ligand contact to GTP. The G2 stretch occupies residues 143–147 (HTTRS). A G3 region spans residues 164 to 167 (DTPG). Residues 164–168 (DTPGL) and 233–236 (NKVD) contribute to the GTP site. A G4 region spans residues 233-236 (NKVD). The G5 stretch occupies residues 318-320 (LSS). One can recognise a KH type-2 domain in the interval 370-447 (LPKEVPYTMT…RLKISVKLRK (78 aa)).

The protein belongs to the TRAFAC class TrmE-Era-EngA-EngB-Septin-like GTPase superfamily. Era GTPase family.

Its subcellular location is the mitochondrion matrix. It is found in the mitochondrion inner membrane. Functionally, probable GTPase that plays a role in the mitochondrial ribosomal small subunit assembly. Specifically binds the 12S mitochondrial rRNA (12S mt-rRNA) to a 33 nucleotide section delineating the 3' terminal stem-loop region. May act as a chaperone that protects the 12S mt-rRNA on the 28S mitoribosomal subunit during ribosomal small subunit assembly. In Danio rerio (Zebrafish), this protein is GTPase Era, mitochondrial (eral1).